The sequence spans 142 residues: Large-conductance mechanosensitive channel (142 aa).

Helical transmembrane passes span 14–34, 38–58, and 82–102; these read VMDLAVGVIIGAAFTKIVTSV, LVMPIVGAITGGGFDFSNYFL, and GSFITVLINFMILAWIIFLLV.

It belongs to the MscL family. In terms of assembly, homopentamer.

Its subcellular location is the cell inner membrane. Functionally, channel that opens in response to stretch forces in the membrane lipid bilayer. May participate in the regulation of osmotic pressure changes within the cell. In Sinorhizobium fredii (strain NBRC 101917 / NGR234), this protein is Large-conductance mechanosensitive channel.